Reading from the N-terminus, the 320-residue chain is Cytochrome f (320 aa).

The first 35 residues, 1 to 35 (MQTRNAFSCIKEGITRSISISIMIYIIIRAPISNA), serve as a signal peptide directing secretion. Positions 36, 56, 59, and 60 each coordinate heme. The chain crosses the membrane as a helical span at residues 286–305 (VQGLLFFFASIILAQIFLVL).

Belongs to the cytochrome f family. In terms of assembly, the 4 large subunits of the cytochrome b6-f complex are cytochrome b6, subunit IV (17 kDa polypeptide, petD), cytochrome f and the Rieske protein, while the 4 small subunits are PetG, PetL, PetM and PetN. The complex functions as a dimer. It depends on heme as a cofactor.

Its subcellular location is the plastid. It is found in the chloroplast thylakoid membrane. Component of the cytochrome b6-f complex, which mediates electron transfer between photosystem II (PSII) and photosystem I (PSI), cyclic electron flow around PSI, and state transitions. This chain is Cytochrome f (petA), found in Glycine max (Soybean).